A 310-amino-acid chain; its full sequence is tRNA pseudouridine synthase B (310 aa).

Asp49 acts as the Nucleophile in catalysis.

The protein belongs to the pseudouridine synthase TruB family. Type 1 subfamily.

It carries out the reaction uridine(55) in tRNA = pseudouridine(55) in tRNA. Its function is as follows. Responsible for synthesis of pseudouridine from uracil-55 in the psi GC loop of transfer RNAs. The chain is tRNA pseudouridine synthase B from Rhizobium etli (strain ATCC 51251 / DSM 11541 / JCM 21823 / NBRC 15573 / CFN 42).